We begin with the raw amino-acid sequence, 531 residues long: RCC1 and BTB domain-containing protein 1 (531 aa).

RCC1 repeat units lie at residues asparagine 40–threonine 91, aspartate 93–alanine 145, glycine 147–aspartate 198, asparagine 199–aspartate 250, glycine 252–threonine 302, and glycine 304–valine 356. BTB domains follow at residues alanine 370–proline 437 and glutamate 470–leucine 499.

Ubiquitously expressed. In the retina, present in the nerve fiber layer and to a lesser extent in the inner and outer plexiform layers (at protein level).

The protein resides in the nucleus. Its function is as follows. May be involved in cell cycle regulation by chromatin remodeling. The protein is RCC1 and BTB domain-containing protein 1 (RCBTB1) of Homo sapiens (Human).